An 808-amino-acid polypeptide reads, in one-letter code: Protein Ac66 (808 aa).

Residues 132-141 are compositionally biased toward pro residues; sequence PFSTPPPTQP. Residues 132–151 are disordered; sequence PFSTPPPTQPPESNVAGVGG.

Interacts with the putative E3 ligase IE0 and with viral ubiquitin/vUbi.

It is found in the host nucleus. The protein localises to the host cytoplasm. In terms of biological role, plays an essential role in the efficient egress of nucleocapsids from the host nucleus to the cytoplasm. The protein is Protein Ac66 (Ac66) of Lepidoptera (butterflies and moths).